Here is a 438-residue protein sequence, read N- to C-terminus: Enolase (438 aa).

Residue Gln164 coordinates (2R)-2-phosphoglycerate. Residue Glu206 is the Proton donor of the active site. Mg(2+)-binding residues include Asp243, Glu289, and Asp316. 4 residues coordinate (2R)-2-phosphoglycerate: Lys341, Arg370, Ser371, and Lys392. The active-site Proton acceptor is the Lys341.

This sequence belongs to the enolase family. Mg(2+) serves as cofactor.

Its subcellular location is the cytoplasm. It localises to the secreted. The protein localises to the cell surface. The catalysed reaction is (2R)-2-phosphoglycerate = phosphoenolpyruvate + H2O. Its pathway is carbohydrate degradation; glycolysis; pyruvate from D-glyceraldehyde 3-phosphate: step 4/5. Its function is as follows. Catalyzes the reversible conversion of 2-phosphoglycerate (2-PG) into phosphoenolpyruvate (PEP). It is essential for the degradation of carbohydrates via glycolysis. The protein is Enolase of Borrelia garinii subsp. bavariensis (strain ATCC BAA-2496 / DSM 23469 / PBi) (Borreliella bavariensis).